We begin with the raw amino-acid sequence, 433 residues long: Lipase 2 (433 aa).

The short motif at 165-167 (HGG) is the Involved in the stabilization of the negatively charged intermediate by the formation of the oxyanion hole element. Ser-239 acts as the Charge relay system in catalysis. Catalysis depends on residues Asp-361 and His-391.

This sequence belongs to the 'GDXG' lipolytic enzyme family.

The catalysed reaction is a triacylglycerol + H2O = a diacylglycerol + a fatty acid + H(+). This Moraxella sp. (strain TA144) protein is Lipase 2 (lip2).